The sequence spans 452 residues: Probable hexaprenyl pyrophosphate synthase, mitochondrial (452 aa).

Residues lysine 108, arginine 111, and histidine 204 each coordinate isopentenyl diphosphate. Mg(2+) contacts are provided by aspartate 211 and aspartate 215. Residue arginine 220 coordinates an all-trans-polyprenyl diphosphate. Arginine 221 lines the isopentenyl diphosphate pocket. Residues lysine 303, threonine 304, glutamine 341, and lysine 358 each contribute to the an all-trans-polyprenyl diphosphate site.

This sequence belongs to the FPP/GGPP synthase family. Requires Mg(2+) as cofactor.

It localises to the mitochondrion. The protein operates within cofactor biosynthesis; ubiquinone biosynthesis. Functionally, assembly of polyisoprenoid side chains. The polyprenyl synthase of coenzyme Q biosynthesis catalyzes the formation from isopentenyl diphosphate of all trans-polyprenyl pyrophosphates generally ranging in length of between 6 and 10 isoprene units depending on the species. The sequence is that of Probable hexaprenyl pyrophosphate synthase, mitochondrial (COQ1) from Yarrowia lipolytica (strain CLIB 122 / E 150) (Yeast).